We begin with the raw amino-acid sequence, 1128 residues long: Nck-associated protein 1 (1128 aa).

At Ser-2 the chain carries N-acetylserine. Residues 640–665 (AVNKKSKKQTGKKGEPEREKPGVESM) are disordered. The span at 651 to 665 (KKGEPEREKPGVESM) shows a compositional bias: basic and acidic residues. Residues 995-1015 (IACLLMVFVAVSLPTLASNVM) traverse the membrane as a helical segment.

The protein belongs to the HEM-1/HEM-2 family. In terms of assembly, component of the WAVE1 complex composed of ABI2, CYFIP1 or CYFIP2, BRK1, NCKAP1 and WASF1/WAVE1. Within the complex, a heterodimer containing NCKAP1 and CYFIP1 interacts with a heterotrimer formed by WAVE1, ABI2 and BRK1. Component of the WAVE2 complex composed of ABI1, CYFIP1/SRA1, NCKAP1/NAP1 and WASF2/WAVE2. CYFIP2 binds to activated RAC1 which causes the complex to dissociate, releasing activated WASF1. The complex can also be activated by NCK1. Associates preferentially with the first SH3 domain of NCK. Interacts with NYAP1, NYAP2 and MYO16. Interacts with TMEM132D. As to expression, preferentially expressed in brain, heart, liver and testis.

It localises to the cell membrane. It is found in the cell projection. Its subcellular location is the lamellipodium membrane. Its function is as follows. Part of the WAVE complex that regulates lamellipodia formation. The WAVE complex regulates actin filament reorganization via its interaction with the Arp2/3 complex. Actin remodeling activity is regulated by RAC1. As component of the WAVE1 complex, required for BDNF-NTRK2 endocytic trafficking and signaling from early endosomes. The chain is Nck-associated protein 1 (Nckap1) from Rattus norvegicus (Rat).